Reading from the N-terminus, the 277-residue chain is Inner kinetochore subunit sim4 (277 aa).

Residues 96 to 138 (NNISDLKKNLHSNKKLEAVLKEELHQIKKFSSDLQSLKSSMGE) adopt a coiled-coil conformation.

It belongs to the CENP-K/MCM22 family. As to quaternary structure, component of the inner kinetochore constitutive centromere-associated network (CCAN) (also known as central kinetochore Sim4 complex in fission yeast), which is composed of at least cnl2, cnp3, cnp20, fta1, fta2, fta3, fta4, fta6, fta7, mal2, mhf1, mhf2, mis6, mis15, mis17, sim4 and wip1. Interacts with mis6 and dad1.

The protein localises to the nucleus. It localises to the chromosome. The protein resides in the centromere. Functionally, component of the kinetochore, a multiprotein complex that assembles on centromeric DNA and attaches chromosomes to spindle microtubules, mediating chromosome segregation and sister chromatid segregation during meiosis and mitosis. Component of the inner kinetochore constitutive centromere-associated network (CCAN), which serves as a structural platform for outer kinetochore assembly. This Schizosaccharomyces pombe (strain 972 / ATCC 24843) (Fission yeast) protein is Inner kinetochore subunit sim4 (sim4).